The primary structure comprises 253 residues: Homeobox protein EMX2 (253 aa).

The homeobox DNA-binding region spans 155–214 (PKRIRTAFSPSQLLRLEHAFEKNHYVVGAERKQLAHSLSLTETQVKVWFQNRRTKFKRQK). Residues 213-253 (QKLEEEGSDSQQKKKGTHHINRWRIATKQASPEEIDVTSDD) are disordered. Over residues 225–234 (KKKGTHHINR) the composition is skewed to basic residues.

The protein belongs to the EMX homeobox family. Interacts with translation initiation factor EIF4E.

Its subcellular location is the nucleus. The protein localises to the cell projection. It localises to the axon. Transcription factor, which in cooperation with EMX1, acts to generate the boundary between the roof and archipallium in the developing brain. May function in combination with OTX1/2 to specify cell fates in the developing central nervous system. In the inner ear, it controls the distribution of GPR156 at hair cell boundaries, and regulates the organization of stereociliary bundles in opposite orientations across the line of polarity reversal (LPR). The chain is Homeobox protein EMX2 (EMX2) from Bos taurus (Bovine).